Reading from the N-terminus, the 135-residue chain is Galectin-1 (135 aa).

A2 carries the post-translational modification N-acetylalanine. The region spanning 4 to 135 is the Galectin domain; sequence GLVASNLNLK…DFKIKCVAFE (132 aa). Residues K13, K19, and K29 each carry the N6-acetyllysine modification. S30 bears the Phosphoserine mark. Residues 45–49, H53, N62, and 69–72 each bind a beta-D-galactoside; these read HFNPR and WGTE. K108 is modified (N6-acetyllysine; alternate). At K108 the chain carries N6-succinyllysine; alternate. K128 is modified (N6-acetyllysine).

As to quaternary structure, homodimer. Binds LGALS3BP. Interacts with CD2, CD3, CD4, CD6, CD7, CD43, ALCAM and CD45. Interacts with laminin (via poly-N-acetyllactosamine). Interacts with SUSD2. Interacts with cargo receptor TMED10; the interaction mediates the translocation from the cytoplasm into the ERGIC (endoplasmic reticulum-Golgi intermediate compartment) and thereby secretion. Interacts with CD69.

Its subcellular location is the secreted. The protein resides in the extracellular space. The protein localises to the extracellular matrix. It is found in the cytoplasm. Its function is as follows. Lectin that binds beta-galactoside and a wide array of complex carbohydrates. Plays a role in regulating apoptosis, cell proliferation and cell differentiation. Inhibits CD45 protein phosphatase activity and therefore the dephosphorylation of Lyn kinase. Strong inducer of T-cell apoptosis. Plays a negative role in Th17 cell differentiation via activation of the receptor CD69. The protein is Galectin-1 (Lgals1) of Rattus norvegicus (Rat).